Reading from the N-terminus, the 485-residue chain is Metalloprotease AprA (485 aa).

His187 is a binding site for Zn(2+). The active site involves Glu188. Residues His191 and His197 each contribute to the Zn(2+) site. Arg268, Gly270, Thr272, Asp300, Gly302, Gly303, Asp305, Thr342, Glu344, Gly349, Gly351, Asp353, Asn358, Leu360, Asn362, Gly366, Gly367, Ala368, Gly369, Asp371, Gly375, Gly376, Gly377, Gly378, Asp380, Gly384, Gly385, Thr386, Gly387, Asp389, Asp398, Asp405, Asp415, Asp461, Thr463, Asn465, Ser467, and Asp469 together coordinate Ca(2+). 3 Hemolysin-type calcium-binding repeats span residues 347–364, 365–382, and 383–395; these read FGGS…ANVL, KGGA…ADQL, and WGGT…VFGA.

It belongs to the peptidase M10B family. It depends on Ca(2+) as a cofactor. Zn(2+) serves as cofactor.

Its subcellular location is the secreted. Its function is as follows. Secreted protease which is important for P.entomophila to counteract the local immune response of Drosophila. Can degrade antimicrobial peptides (AMPs), e.g. Diptericin and Cecropin A. Thus, protects P.entomophila from the Drosophila antimicrobial peptides produced by the gut innate immune response, and promotes bacterial persistence in the Drosophila gut and killing of the host. Is responsible for maturation of pro-Monalysin to the active toxin Monalysin, by cleaving its N-terminus. This chain is Metalloprotease AprA, found in Pseudomonas entomophila (strain L48).